A 124-amino-acid chain; its full sequence is Putative RNA polymerase II transcriptional coactivator (124 aa).

The interval 1-61 is disordered; it reads MSSSSSSEDE…GRLKDSDGNE (61 aa). 2 stretches are compositionally biased toward basic and acidic residues: residues 11-21 and 39-58; these read LEKKVTKEQKK and QEVK…KDSD.

It belongs to the transcriptional coactivator PC4 family.

It localises to the nucleus. Its function is as follows. General coactivator that functions cooperatively with TAFs and mediates functional interactions between upstream activators and the general transcriptional machinery. Binds single-stranded DNA. The protein is Putative RNA polymerase II transcriptional coactivator of Caenorhabditis elegans.